The following is a 149-amino-acid chain: D-aminoacyl-tRNA deacylase (149 aa).

The Gly-cisPro motif, important for rejection of L-amino acids signature appears at 137–138 (GP).

This sequence belongs to the DTD family. In terms of assembly, homodimer.

It localises to the cytoplasm. It catalyses the reaction glycyl-tRNA(Ala) + H2O = tRNA(Ala) + glycine + H(+). The enzyme catalyses a D-aminoacyl-tRNA + H2O = a tRNA + a D-alpha-amino acid + H(+). An aminoacyl-tRNA editing enzyme that deacylates mischarged D-aminoacyl-tRNAs. Also deacylates mischarged glycyl-tRNA(Ala), protecting cells against glycine mischarging by AlaRS. Acts via tRNA-based rather than protein-based catalysis; rejects L-amino acids rather than detecting D-amino acids in the active site. By recycling D-aminoacyl-tRNA to D-amino acids and free tRNA molecules, this enzyme counteracts the toxicity associated with the formation of D-aminoacyl-tRNA entities in vivo and helps enforce protein L-homochirality. The polypeptide is D-aminoacyl-tRNA deacylase (Caldicellulosiruptor bescii (strain ATCC BAA-1888 / DSM 6725 / KCTC 15123 / Z-1320) (Anaerocellum thermophilum)).